A 360-amino-acid chain; its full sequence is Probable cinnamyl alcohol dehydrogenase 9 (360 aa).

Zn(2+) is bound at residue Cys50. Residue Thr52 participates in NADP(+) binding. Zn(2+) contacts are provided by His72, Glu73, Cys103, Cys106, Cys109, Cys117, and Cys166. NADP(+)-binding positions include Thr170, 191–196, 214–219, Thr254, Gly278, and 301–303; these read GLGGLG, SSSSTK, and SDV.

It belongs to the zinc-containing alcohol dehydrogenase family. Homodimer. The cofactor is Zn(2+). In terms of tissue distribution, expressed in the vasculature of the primary root and elongation regions. Expressed in the hypocotyl, cotyledon veins, vasculature of the first rosette leaves, and hydathodes. In stems, expressed in the vascular cambium, interfascicular cambium, developing xylem, and phloem. Expressed in the entire floral organs at late developing stage, and in the abscission, style and stigmatic regions of siliques and seed funicules.

It catalyses the reaction (E)-cinnamyl alcohol + NADP(+) = (E)-cinnamaldehyde + NADPH + H(+). Its pathway is aromatic compound metabolism; phenylpropanoid biosynthesis. Involved in lignin biosynthesis. May catalyze the final step specific for the production of lignin monomers, like coniferyl alcohol, sinapyl alcohol and 4-coumaryl alcohol. This is Probable cinnamyl alcohol dehydrogenase 9 (CAD9) from Arabidopsis thaliana (Mouse-ear cress).